A 1604-amino-acid polypeptide reads, in one-letter code: Collagen alpha-1(XVI) chain (1604 aa).

Residues 1-21 form the signal peptide; sequence MWVSWAPGLWLLGLWATFGHG. An N-linked (GlcNAc...) asparagine glycan is attached at N47. The Laminin G-like domain occupies 50–231; sequence GFNLIHRLSL…LQQVHIYCDP (182 aa). The interval 232 to 374 is nonhelical region 10 (NC10); it reads ELVLEEGCCE…SPDAPLQCAE (143 aa). The span at 301 to 311 shows a compositional bias: basic and acidic residues; it reads AERGAKVHQET. The interval 301–509 is disordered; sequence AERGAKVHQE…KGEKGDPCEV (209 aa). An N-linked (GlcNAc...) asparagine glycan is attached at N327. The Collagen-like 1 domain maps to 375–423; that stretch reads GPKGEKGESGALGPSGLPGSTGEKGQKGEKGDGGIKGVPGKPGRDGRPG. The tract at residues 375-506 is triple-helical region 9 (COL9) with 3 imperfections; sequence GPKGEKGESG…PGVKGEKGDP (132 aa). The span at 383–397 shows a compositional bias: low complexity; that stretch reads SGALGPSGLPGSTGE. Basic and acidic residues predominate over residues 398–407; sequence KGQKGEKGDG. Residues 449 to 460 are compositionally biased toward pro residues; the sequence is PGPPGLPGPPGI. Residues 486-495 are compositionally biased toward gly residues; sequence GKEGPGGKPG. The tract at residues 507–521 is nonhelical region 9 (NC9); the sequence is CEVCPTLPEGFQNFV. Positions 522 to 555 are triple-helical region 8 (COL8) with 1 imperfection; sequence GLPGKPGPKGEPGDPVPARGDPGIQGIKGEKGEP. Positions 540-542 match the Cell attachment site motif; the sequence is RGD. The nonhelical region 8 (NC8) stretch occupies residues 556-572; it reads CLSCSSVVGAQHLVSST. Residues 573–631 are triple-helical region 7 (COL7) with 1 imperfection; the sequence is GASGDVGSPGFGLPGLPGRAGVPGLKGEKGNFGEAGPAGSPGPPGPVGPAGIKGAKGEP. Collagen-like domains are found at residues 573–633 and 667–721; these read GASG…EPCE and GLPG…GEKG. A disordered region spans residues 604–917; that stretch reads FGEAGPAGSP…PPGIPGPPGP (314 aa). The interval 632 to 652 is nonhelical region 7 (NC7); the sequence is CEPCPALSNLQDGDVRVVALP. The segment at 653 to 723 is triple-helical region 6 (COL6) with 1 imperfection; sequence GPSGEKGEPG…AGPKGEKGDG (71 aa). Over residues 674–684 the composition is skewed to basic and acidic residues; the sequence is KAGERGLKGQK. The span at 686–702 shows a compositional bias: low complexity; that stretch reads DAGNPGDPGTPGTTGRP. The nonhelical region 6 (NC6) stretch occupies residues 724–738; it reads CTACPSLQGTVTDMA. A triple-helical region 5 (COL5) with 3 imperfections region spans residues 739–876; that stretch reads GRPGQPGPKG…RGEKGEPGEC (138 aa). 3 stretches are compositionally biased toward low complexity: residues 766–781, 792–808, and 826–846; these read LPGV…VQGE, PQGE…QGLP, and PGVK…SGPP. The region spanning 788–840 is the Collagen-like 4 domain; that stretch reads GVQGPQGEPGAPGLPGIQGLPGPRGPPGPTGEKGAQGSPGVKGATGPVGPPGA. Positions 864 to 873 are enriched in basic and acidic residues; it reads KGPRGEKGEP. The tract at residues 877 to 887 is nonhelical region 5 (NC5); sequence SCPSQGDLIFS. The Collagen-like 5 domain maps to 888 to 938; sequence GMPGAPGLWMGSSWQPGPQGPPGIPGPPGPPGVPGLQGVPGNNGLPGQPGL. The segment at 888 to 939 is triple-helical region 4 (COL4) with 2 imperfections; the sequence is GMPGAPGLWMGSSWQPGPQGPPGIPGPPGPPGVPGLQGVPGNNGLPGQPGLT. Over residues 905–917 the composition is skewed to pro residues; sequence PQGPPGIPGPPGP. The tract at residues 940-973 is nonhelical region 4 (NC4); it reads AELGSLPIEQHLLKSICGDCVQGQRAHPGYLVEK. The tract at residues 974–988 is triple-helical region 3 (COL3); sequence GEKGDQGIPGVPGLD. The tract at residues 989–1011 is nonhelical region 3 (NC3); it reads NCAQCFLSLERPRAEEARGDNSE. Disordered regions lie at residues 1001–1429 and 1468–1517; these read RAEE…VPGS and MAAA…PGTK. The short motif at 1006–1008 is the Cell attachment site element; sequence RGD. The triple-helical region 2 (COL2) with 2 imperfections stretch occupies residues 1012-1433; that stretch reads GDPGCVGSPG…PGVPGSMGDM (422 aa). Residues 1018–1075 form the Collagen-like 6 domain; it reads GSPGLPGPPGLPGQRGEEGPPGMRGSPGPPGPIGPPGFPGAVGSPGLPGLQGERGLTG. 3 stretches are compositionally biased toward pro residues: residues 1044-1055, 1160-1169, and 1199-1208; these read PGPPGPIGPPGF, FPGPPGPPGF, and SPGPPGPPGI. Basic and acidic residues predominate over residues 1217-1226; that stretch reads LDGKDGKPGL. The short motif at 1227-1229 is the Cell attachment site element; sequence RGD. The span at 1271-1284 shows a compositional bias: low complexity; sequence RPGAEGEPGAMGPQ. 2 stretches are compositionally biased toward pro residues: residues 1286–1302 and 1330–1342; these read RPGP…PGQP and QPGP…PPGE. The segment covering 1369 to 1378 has biased composition (low complexity); that stretch reads DPGAAGQKGQ. A compositionally biased stretch (gly residues) spans 1386–1395; it reads GMPGGPGKSG. Low complexity predominate over residues 1420-1429; sequence SPGLPGVPGS. The interval 1434-1472 is nonhelical region 2 (NC2); it reads VNYDEIKRFIRQEIIKMFDERMAYYTSRMQFPMEMAAAP. Collagen-like domains lie at 1472–1524 and 1528–1576; these read PGRP…GDIG and AGEN…GKAG. Positions 1473 to 1578 are triple-helical region 1 (COL1) with 2 imperfections; the sequence is GRPGPPGKDG…MGQPGKAGHC (106 aa). Residues 1579–1604 form a nonhelical region 1 (NC1) region; the sequence is NPSDCFGAMPMEQQYPPMKTMKGPFG.

This sequence belongs to the fibril-associated collagens with interrupted helices (FACIT) family. As to quaternary structure, homotrimer. Interacts with FBN1, fibronectin and integrins ITGA1/ITGB1 and ITGA2/ITGB1. Integrin ITGA1/ITGB1 binds to a unique site within COL16A1 located close to its C-terminal end between collagenous domains COL1-COL3. In terms of processing, prolines at the third position of the tripeptide repeating unit (G-X-Y) are hydroxylated in some or all of the chains. Post-translationally, glycosylated. In papillary dermis, is a component of specialized fibrillin-1-containing microfibrils, whereas in territorial cartilage matrix, it is localized to a discrete population of thin, weakly banded collagen fibrils in association with other collagens (at protein level). In the placenta, where it is found in the amnion, a membranous tissue lining the amniotic cavity. Within the amnion, it is found in an acellular, relatively dense layer of a complex network of reticular fibers. Also located to a fibroblast layer beneath this dense layer. Exists in tissues in association with other types of collagen.

Its subcellular location is the secreted. The protein resides in the extracellular space. It localises to the extracellular matrix. In terms of biological role, involved in mediating cell attachment and inducing integrin-mediated cellular reactions, such as cell spreading and alterations in cell morphology. This is Collagen alpha-1(XVI) chain (COL16A1) from Homo sapiens (Human).